A 116-amino-acid polypeptide reads, in one-letter code: Iron-sulfur cluster insertion protein ErpA (116 aa).

3 residues coordinate iron-sulfur cluster: cysteine 44, cysteine 108, and cysteine 110.

It belongs to the HesB/IscA family. Homodimer. It depends on iron-sulfur cluster as a cofactor.

In terms of biological role, required for insertion of 4Fe-4S clusters for at least IspG. The protein is Iron-sulfur cluster insertion protein ErpA of Pseudomonas syringae pv. syringae (strain B728a).